The sequence spans 481 residues: Cysteine--tRNA ligase (481 aa).

Position 27 (Cys-27) interacts with Zn(2+). The short motif at 29–39 (PTVYNYAHIGN) is the 'HIGH' region element. Residues Cys-222, His-247, and Glu-251 each coordinate Zn(2+). The 'KMSKS' region signature appears at 279-283 (KMSKS). Residue Lys-282 coordinates ATP.

This sequence belongs to the class-I aminoacyl-tRNA synthetase family. In terms of assembly, monomer. Zn(2+) is required as a cofactor.

It localises to the cytoplasm. It carries out the reaction tRNA(Cys) + L-cysteine + ATP = L-cysteinyl-tRNA(Cys) + AMP + diphosphate. The chain is Cysteine--tRNA ligase from Borrelia hermsii (strain HS1 / DAH).